Here is a 711-residue protein sequence, read N- to C-terminus: Dendrin (711 aa).

4 disordered regions span residues 1-22 (MLDGPLFSEGPDSPRELQDEES), 49-273 (APSR…KKRL), 324-446 (DLNS…SQGL), and 479-677 (PSGV…AELS). Over residues 75–84 (PGSPQPPPRR) the composition is skewed to pro residues. Positions 102–134 (LAEVRAREQEKRKAASQEREAKETERKRRKAGG) form a coiled coil. The span at 105-127 (VRAREQEKRKAASQEREAKETER) shows a compositional bias: basic and acidic residues. The interval 113 to 131 (RKAASQEREAKETERKRRK) is nuclear localization. Low complexity predominate over residues 150-161 (APRVAQLAGLPA). The interval 186–236 (GSAWAGPWGGRRPGPPSYEAHLLLRGSAGTAPRRRWDRPPPYVAPPSYEGP) is interaction with MAGI2. 2 stretches are compositionally biased toward low complexity: residues 252 to 262 (PTSSAPAATPA) and 346 to 356 (APAGSATAAPC). The interval 341 to 436 (AGTEIAPAGS…LEGWKATRRA (96 aa)) is interaction with ACTN1. S389 bears the Phosphoserine mark. Residues 408–709 (GGTGWRESLG…IRGTQQGNRK (302 aa)) form an interaction with CD2AP and NPHS1 region. Residues 529–546 (GEAEGGRPGDSTLEERTF) are compositionally biased toward basic and acidic residues.

As to quaternary structure, forms a ternary complex with MAGI2 and SH3KBP1; recruits DDN to the cytoplasm. Interacts with MAGI1. Interacts with ACTN1 and may interact with WWC1. Interacts with the podocyte slit diaphragm proteins CD2AP, NPHS1 and NPHS2; the interaction with CD2AP and NPHS1 is direct. In terms of tissue distribution, specifically expressed in brain and kidney. Expressed in kidney glomerular capillary loops (at protein level).

The protein localises to the cell projection. It localises to the dendritic spine membrane. Its subcellular location is the cytoplasm. The protein resides in the endoplasmic reticulum membrane. It is found in the perikaryon. The protein localises to the nucleus. Functionally, promotes apoptosis of kidney glomerular podocytes. Podocytes are highly specialized cells essential to the ultrafiltration of blood, resulting in the extraction of urine and the retention of protein. The sequence is that of Dendrin (DDN) from Homo sapiens (Human).